The following is a 677-amino-acid chain: Heat shock transcription factor (677 aa).

Disordered regions lie at residues 1 to 56 and 115 to 164; these read MGHN…DDSN and STSS…SQQP. Polar residues-rich tracts occupy residues 115–131 and 143–164; these read STSS…TNAT and QPSS…SQQP. A DNA-binding region spans residues 193–297; it reads ARPAFVNKLW…EYLLENIVRQ (105 aa). The interval 320 to 373 is involved in trimerization; it reads ELETVKYNQLAIAEDLKRITKDNEMLWKENMMARERHQSQQQVLEKLLRFLSSV. 2 stretches are compositionally biased toward low complexity: residues 400 to 416 and 457 to 501; these read NHMS…INPN and RSMS…QGQQ. 3 disordered regions span residues 400–444, 457–541, and 606–677; these read NHMS…VPLQ, RSMS…NQYS, and KLNP…RRAA. The interval 466–677 is activatory; it reads NLNQRQSPQN…NNGQKRRRAA (212 aa). Composition is skewed to polar residues over residues 502 to 541 and 629 to 641; these read FSYP…NQYS and FANT…SEQP. Over residues 650-669 the composition is skewed to basic and acidic residues; sequence EELRNSRLHEPDRSFEEKNN.

Belongs to the HSF family. In terms of assembly, homotrimer. Homotrimerization increases the affinity of HSF1 to DNA. Exhibits temperature-dependent phosphorylation.

Its subcellular location is the nucleus. DNA-binding transcription factor that specifically binds heat shock promoter elements (HSE) and activates transcription. This is Heat shock transcription factor from Kluyveromyces lactis (strain ATCC 8585 / CBS 2359 / DSM 70799 / NBRC 1267 / NRRL Y-1140 / WM37) (Yeast).